The following is a 101-amino-acid chain: Large ribosomal subunit protein eL30 (101 aa).

This sequence belongs to the eukaryotic ribosomal protein eL30 family.

This Pyrobaculum islandicum (strain DSM 4184 / JCM 9189 / GEO3) protein is Large ribosomal subunit protein eL30.